The chain runs to 89 residues: Small ribosomal subunit protein uS14A (89 aa).

Belongs to the universal ribosomal protein uS14 family. In terms of assembly, part of the 30S ribosomal subunit. Contacts proteins S3 and S10.

Its function is as follows. Binds 16S rRNA, required for the assembly of 30S particles and may also be responsible for determining the conformation of the 16S rRNA at the A site. This chain is Small ribosomal subunit protein uS14A, found in Lacticaseibacillus paracasei (strain ATCC 334 / BCRC 17002 / CCUG 31169 / CIP 107868 / KCTC 3260 / NRRL B-441) (Lactobacillus paracasei).